Here is a 1484-residue protein sequence, read N- to C-terminus: Cystic fibrosis transmembrane conductance regulator (1484 aa).

The Cytoplasmic portion of the chain corresponds to 1-77 (MQRSPLEKAS…KLINALRRCF (77 aa)). A helical transmembrane segment spans residues 78–98 (FWRFMFYGIILYLGEVTKSVQ). The 285-residue stretch at 81 to 365 (FMFYGIILYL…WAVQTWYDSL (285 aa)) folds into the ABC transmembrane type-1 1 domain. The Extracellular segment spans residues 99 to 122 (PLLLGRIIASYDPDNKEERSIAIY). A helical membrane pass occupies residues 123-146 (LGIGLCLLFVMRTLLLHPAIFGLH). Residues 147 to 195 (RIGMQMRIAMFSLIYKKTLKLSSRVLDKISIGQLVSLLSNNLNKFDEGL) are Cytoplasmic-facing. A helical transmembrane segment spans residues 196-216 (ALAHFVWIAPLQVTLLMGLLW). Residues 217–222 (DLLQAS) lie on the Extracellular side of the membrane. A helical transmembrane segment spans residues 223 to 243 (AFCGLAFLIVLALFQAGLGRM). The Cytoplasmic segment spans residues 244-298 (MMKYRDQRAGKINERLVITSEMIENIQSVKAYCWEEAMEKMIESIRQTELKLTRK). A helical transmembrane segment spans residues 299–319 (AAYVRYFNSSAFFFSGFFVVF). Residues 320–339 (LSVLPYALIKTIVLRKIFTT) lie on the Extracellular side of the membrane. The helical transmembrane segment at 340-358 (ISFCIVLRMAVTRQFPWAV) threads the bilayer. At 359–860 (QTWYDSLGAI…YLRYVTIHKS (502 aa)) the chain is on the cytoplasmic side. Residues tryptophan 401, serine 434, 458–465 (GSTGAGKT), and glutamine 493 contribute to the ATP site. One can recognise an ABC transporter 1 domain in the interval 423 to 646 (NADNSLFFSN…RPDFSSKLMG (224 aa)). The S-palmitoyl cysteine moiety is linked to residue cysteine 524. Residues serine 549 and serine 660 each carry the phosphoserine modification. Residues 654 to 833 (SAERRNSIIT…EEINEEDLKE (180 aa)) are disordered R region. Position 670 is a phosphoserine; by PKA (serine 670). Serine 686 is subject to Phosphoserine. Residue lysine 688 forms a Glycyl lysine isopeptide (Lys-Gly) (interchain with G-Cter in ubiquitin) linkage. Residues serine 700 and serine 712 each carry the phosphoserine modification. Position 717 is a phosphothreonine (threonine 717). 5 positions are modified to phosphoserine: serine 737, serine 769, serine 792, serine 797, and serine 815. A helical transmembrane segment spans residues 861–881 (LVFVLIWCLVIFLAEVAISLV). The region spanning 861 to 1157 (LVFVLIWCLV…AVNSSIDVDS (297 aa)) is the ABC transmembrane type-1 2 domain. Residues 882–920 (VLWLLKKTASQDKGNSTQSINSSYTVIFTSTSTYYVFYI) are Extracellular-facing. N-linked (GlcNAc...) asparagine glycans are attached at residues asparagine 896 and asparagine 902. The discontinuously helical transmembrane segment at 921-941 (YVGVADTLLALGFFRGLPLVH) threads the bilayer. Over 942-992 (TLITVSKILHHKMLHAVLQAPMSTLNALKAGGILNRFSKDIAILDDLLPLT) the chain is Cytoplasmic. Residues 993–1013 (IFDFVQLLLIVIGAVTVVSAL) traverse the membrane as a helical segment. At 1014 to 1015 (QP) the chain is on the extracellular side. Residues 1016 to 1036 (YIFLATVPVIAAFIMLRAYFL) traverse the membrane as a helical segment. Over 1037–1097 (HTSQQLKQLE…TANWFLYLST (61 aa)) the chain is Cytoplasmic. Residues 1098–1118 (LRWFQMRMEIIFVIFFIAITF) form a helical membrane-spanning segment. The Extracellular portion of the chain corresponds to 1119-1132 (ISILTTGEGVGAVG). Residues 1133–1153 (IILTLAMNIMGTLQWAVNSSI) traverse the membrane as a helical segment. The Cytoplasmic segment spans residues 1154–1484 (DVDSLMRSVS…TEEEVQETRL (331 aa)). The ABC transporter 2 domain maps to 1214 to 1447 (MTVKDLTAKY…KSLFRQAISP (234 aa)). ATP contacts are provided by residues tyrosine 1223 and 1248 to 1255 (GRTGSGKS). The segment at 1390 to 1484 (RTLKQAFADC…TEEEVQETRL (95 aa)) is interaction with GORASP2. Cysteine 1399 is lipidated: S-palmitoyl cysteine. A phosphoserine mark is found at serine 1448 and serine 1460. Positions 1456–1465 (HRNSSKHKSR) are enriched in basic residues. The segment at 1456-1484 (HRNSSKHKSRSQIAALKEETEEEVQETRL) is disordered. Positions 1474–1484 (ETEEEVQETRL) are enriched in acidic residues. The PDZ-binding motif lies at 1482–1484 (TRL).

This sequence belongs to the ABC transporter superfamily. ABCC family. CFTR transporter (TC 3.A.1.202) subfamily. In terms of assembly, monomer; does not require oligomerization for channel activity. May form oligomers in the membrane. Interacts with SLC26A3, SLC26A6 and NHERF1. Interacts with SHANK2. Interacts with MYO6. Interacts (via C-terminus) with GOPC (via PDZ domain); this promotes CFTR internalization and thereby decreases channel activity. Interacts with SLC4A7 through NHERF1. Found in a complex with MYO5B and RAB11A. Interacts with ANO1. Interacts with SLC26A8. Interacts with AHCYL1; the interaction increases CFTR activity. Interacts with CSE1L. The core-glycosylated form interacts with GORASP2 (via PDZ GRASP-type 1 domain) in respone to ER stress. Interacts with MARCHF2; the interaction leads to CFTR ubiqtuitination and degradation. Interacts with ADGRG2. Post-translationally, N-glycosylated. Phosphorylated; cAMP treatment promotes phosphorylation and activates the channel. Dephosphorylation decreases the ATPase activity (in vitro). Phosphorylation at PKA sites activates the channel. Phosphorylation at PKC sites enhances the response to phosphorylation by PKA. Phosphorylated by AMPK; this inhibits channel activity. In terms of processing, ubiquitinated, leading to its degradation in the lysosome. Deubiquitination by USP10 in early endosomes enhances its endocytic recycling to the cell membrane. Ubiquitinated by RNF185 during ER stress. Ubiquitinated by MARCHF2.

It localises to the apical cell membrane. It is found in the early endosome membrane. The protein localises to the cell membrane. Its subcellular location is the recycling endosome membrane. The protein resides in the endoplasmic reticulum membrane. It localises to the nucleus. The catalysed reaction is ATP + H2O + closed Cl(-) channel = ADP + phosphate + open Cl(-) channel.. It catalyses the reaction chloride(in) = chloride(out). It carries out the reaction hydrogencarbonate(in) = hydrogencarbonate(out). The enzyme catalyses ATP + H2O = ADP + phosphate + H(+). In terms of biological role, epithelial ion channel that plays an important role in the regulation of epithelial ion and water transport and fluid homeostasis. Mediates the transport of chloride ions across the cell membrane. Possesses an intrinsic ATPase activity and utilizes ATP to gate its channel; the passive flow of anions through the channel is gated by cycles of ATP binding and hydrolysis by the ATP-binding domains. The ion channel is also permeable to HCO(3)(-); selectivity depends on the extracellular chloride concentration. Exerts its function also by modulating the activity of other ion channels and transporters. Contributes to the regulation of the pH and the ion content of the epithelial fluid layer. Modulates the activity of the epithelial sodium channel (ENaC) complex, in part by regulating the cell surface expression of the ENaC complex. May regulate bicarbonate secretion and salvage in epithelial cells by regulating the transporter SLC4A7. Can inhibit the chloride channel activity of ANO1. Plays a role in the chloride and bicarbonate homeostasis during sperm epididymal maturation and capacitation. This Mustela putorius furo (European domestic ferret) protein is Cystic fibrosis transmembrane conductance regulator.